The primary structure comprises 513 residues: Glutamyl-tRNA(Gln) amidotransferase subunit B, mitochondrial (513 aa).

It belongs to the GatB/GatE family. GatB subfamily. As to quaternary structure, subunit of the heterotrimeric GatFAB amidotransferase (AdT) complex, composed of A, B and F subunits.

It localises to the mitochondrion. The catalysed reaction is L-glutamyl-tRNA(Gln) + L-glutamine + ATP + H2O = L-glutaminyl-tRNA(Gln) + L-glutamate + ADP + phosphate + H(+). Its function is as follows. Allows the formation of correctly charged Gln-tRNA(Gln) through the transamidation of misacylated Glu-tRNA(Gln) in the mitochondria. The reaction takes place in the presence of glutamine and ATP through an activated gamma-phospho-Glu-tRNA(Gln). The sequence is that of Glutamyl-tRNA(Gln) amidotransferase subunit B, mitochondrial from Debaryomyces hansenii (strain ATCC 36239 / CBS 767 / BCRC 21394 / JCM 1990 / NBRC 0083 / IGC 2968) (Yeast).